The chain runs to 114 residues: Thioredoxin H1 (114 aa).

Alanine 2 is subject to N-acetylalanine. Residues 2 to 114 enclose the Thioredoxin domain; it reads ASEEGQVIAC…LQSTIAKHLA (113 aa). Residues cysteine 40 and cysteine 43 each act as nucleophile in the active site. Residues cysteine 40 and cysteine 43 are joined by a disulfide bond.

It belongs to the thioredoxin family. Plant H-type subfamily. In terms of assembly, interacts with FBA6. Interacts with MDH1.

It localises to the cytoplasm. Functionally, thiol-disulfide oxidoreductase involved in the redox regulation of a number of cytosolic enzymes. Activates the cytosolic malate dehydrogenase (MDH) probably by reducing an interchain disulfide bond of the inactive MDH homodimer. Possesses insulin disulfide bonds reducing activity. The sequence is that of Thioredoxin H1 (TRX1) from Arabidopsis thaliana (Mouse-ear cress).